We begin with the raw amino-acid sequence, 89 residues long: Small ribosomal subunit protein uS15 (89 aa).

The segment covering methionine 1–serine 18 has biased composition (basic and acidic residues). Residues methionine 1 to proline 25 are disordered.

Belongs to the universal ribosomal protein uS15 family. Part of the 30S ribosomal subunit. Forms a bridge to the 50S subunit in the 70S ribosome, contacting the 23S rRNA.

In terms of biological role, one of the primary rRNA binding proteins, it binds directly to 16S rRNA where it helps nucleate assembly of the platform of the 30S subunit by binding and bridging several RNA helices of the 16S rRNA. Forms an intersubunit bridge (bridge B4) with the 23S rRNA of the 50S subunit in the ribosome. This chain is Small ribosomal subunit protein uS15, found in Teredinibacter turnerae (strain ATCC 39867 / T7901).